The chain runs to 118 residues: Aspartate 1-decarboxylase (118 aa).

The active-site Schiff-base intermediate with substrate; via pyruvic acid is the Ser25. The residue at position 25 (Ser25) is a Pyruvic acid (Ser). Thr57 serves as a coordination point for substrate. Catalysis depends on Tyr58, which acts as the Proton donor. Residue 73–75 participates in substrate binding; that stretch reads GAA.

This sequence belongs to the PanD family. Heterooctamer of four alpha and four beta subunits. Pyruvate serves as cofactor. Post-translationally, is synthesized initially as an inactive proenzyme, which is activated by self-cleavage at a specific serine bond to produce a beta-subunit with a hydroxyl group at its C-terminus and an alpha-subunit with a pyruvoyl group at its N-terminus.

Its subcellular location is the cytoplasm. The enzyme catalyses L-aspartate + H(+) = beta-alanine + CO2. Its pathway is cofactor biosynthesis; (R)-pantothenate biosynthesis; beta-alanine from L-aspartate: step 1/1. Its function is as follows. Catalyzes the pyruvoyl-dependent decarboxylation of aspartate to produce beta-alanine. This is Aspartate 1-decarboxylase from Caulobacter vibrioides (strain ATCC 19089 / CIP 103742 / CB 15) (Caulobacter crescentus).